Here is a 950-residue protein sequence, read N- to C-terminus: MTETPTAQPDRAADADTPQHRYTAELAGQIEGAWQQTWAVEGTFNVPNPVGELAPPDGTVPADKMFVQDMFPYPSGEGLHVGHPLGYIATDVYARYYRMTGRNVLHALGFDAFGLPAEQYAVQTGTHPRTRTEANIVNFRRQLGRLGLGHDTRRSFSTTDVDFYTWTQWIFLQIYNAWFDRDANRARPIAELIGEFESGVRTLDDGRPWSELSAGERADVVDSYRLVYRADSMVNWCPGLGTVLANEEVTADGRSDRGNFPVFRKRLRQWMMRITAYSDRLLEDLEVLDWPDKVKTMQRNWIGRSTGASVQFGTDAGDIEVFTTRPDTLFGATYLVLAPEHPLVEQLAAEQWPDDVDGRWTFGATTPREAVAAYRASIAAKSDLERQENKTKTGAFLGAYATNPANGQQVPIFIADYVLIGYGTGAIMAVPGHDQRDWEFAHEFGLPVVEVISGGDISEAAYAGDGLLVNSDYLDGLDVAAAKAAITDRLVADGRGRARVEYKLRDWLFARQRYWGEPFPIVYDSDGRPHPLPESALPVELPDVPDYSPVLFDPDDADSEPNPPLNKATDWVHVELDLGDGLQTYTRDTNVMPQWAGSSWYELRYTDPLNKEALCAKENEAYWMGPRPAEHGPDDPGGVDLYVGGVEHAVLHLLYSRFWHKVLYDLGHVSSREPYRRLVNQGYIQAFAYTDSRGSYVPAAEVVERDGKFWFEGAEVFQEFGKIGKSLKNSVSPDEICDNYGADTLRVYEMSMGPLEASRPWATKDVVGAHRFLQRVWRLVVDEQSGAVRVANHEALDTDTLRALHRTVAGVSEDYAALRNNTAAAKLIEYTNHLTKEGVTARAAIEPLVLMVAPLAPHLAEELWRRLGHDTSLAHGPFPVADPQYLVTDTVEYPVQVNGKVRSRITVDADAGKDTLEAAALADEKVQAFLNGATPKKVIVVPGRLVNLVV.

Positions 72–83 (PYPSGEGLHVGH) match the 'HIGH' region motif. The 'KMSKS' region motif lies at 722–726 (KIGKS). Lysine 725 contacts ATP.

Belongs to the class-I aminoacyl-tRNA synthetase family.

The protein localises to the cytoplasm. It carries out the reaction tRNA(Leu) + L-leucine + ATP = L-leucyl-tRNA(Leu) + AMP + diphosphate. The chain is Leucine--tRNA ligase from Mycobacterium sp. (strain JLS).